The primary structure comprises 377 residues: PqqA peptide cyclase (377 aa).

The 217-residue stretch at 12-228 folds into the Radical SAM core domain; it reads FGIPLAVLLE…EAARERLKGQ (217 aa). [4Fe-4S] cluster-binding residues include Cys26, Cys30, and Cys33.

This sequence belongs to the radical SAM superfamily. PqqE family. Interacts with PqqD. The interaction is necessary for activity of PqqE. [4Fe-4S] cluster serves as cofactor.

It carries out the reaction [PQQ precursor protein] + S-adenosyl-L-methionine = E-Y cross-linked-[PQQ precursor protein] + 5'-deoxyadenosine + L-methionine + H(+). It participates in cofactor biosynthesis; pyrroloquinoline quinone biosynthesis. Its function is as follows. Catalyzes the cross-linking of a glutamate residue and a tyrosine residue in the PqqA protein as part of the biosynthesis of pyrroloquinoline quinone (PQQ). The sequence is that of PqqA peptide cyclase from Rhodopseudomonas palustris (strain ATCC BAA-98 / CGA009).